Reading from the N-terminus, the 616-residue chain is Dihydroxy-acid dehydratase (616 aa).

Asp81 provides a ligand contact to Mg(2+). Cys122 provides a ligand contact to [2Fe-2S] cluster. Mg(2+) is bound by residues Asp123 and Lys124. The residue at position 124 (Lys124) is an N6-carboxylysine. A [2Fe-2S] cluster-binding site is contributed by Cys195. Glu491 contacts Mg(2+). The active-site Proton acceptor is the Ser517.

Belongs to the IlvD/Edd family. As to quaternary structure, homodimer. It depends on [2Fe-2S] cluster as a cofactor. Requires Mg(2+) as cofactor.

The enzyme catalyses (2R)-2,3-dihydroxy-3-methylbutanoate = 3-methyl-2-oxobutanoate + H2O. It carries out the reaction (2R,3R)-2,3-dihydroxy-3-methylpentanoate = (S)-3-methyl-2-oxopentanoate + H2O. Its pathway is amino-acid biosynthesis; L-isoleucine biosynthesis; L-isoleucine from 2-oxobutanoate: step 3/4. The protein operates within amino-acid biosynthesis; L-valine biosynthesis; L-valine from pyruvate: step 3/4. Functions in the biosynthesis of branched-chain amino acids. Catalyzes the dehydration of (2R,3R)-2,3-dihydroxy-3-methylpentanoate (2,3-dihydroxy-3-methylvalerate) into 2-oxo-3-methylpentanoate (2-oxo-3-methylvalerate) and of (2R)-2,3-dihydroxy-3-methylbutanoate (2,3-dihydroxyisovalerate) into 2-oxo-3-methylbutanoate (2-oxoisovalerate), the penultimate precursor to L-isoleucine and L-valine, respectively. The chain is Dihydroxy-acid dehydratase from Salmonella paratyphi A (strain ATCC 9150 / SARB42).